The sequence spans 136 residues: Cell division protein SepF 3 (136 aa).

Belongs to the SepF family. Homodimer. Interacts with FtsZ.

Its subcellular location is the cytoplasm. In terms of biological role, cell division protein that is part of the divisome complex and is recruited early to the Z-ring. Probably stimulates Z-ring formation, perhaps through the cross-linking of FtsZ protofilaments. Its function overlaps with FtsA. This chain is Cell division protein SepF 3, found in Streptomyces coelicolor (strain ATCC BAA-471 / A3(2) / M145).